Consider the following 152-residue polypeptide: Deoxyuridine 5'-triphosphate nucleotidohydrolase (152 aa).

Substrate is bound by residues 71–73 (RSG), asparagine 84, 88–90 (LID), and methionine 98.

This sequence belongs to the dUTPase family. The cofactor is Mg(2+).

The enzyme catalyses dUTP + H2O = dUMP + diphosphate + H(+). The protein operates within pyrimidine metabolism; dUMP biosynthesis; dUMP from dCTP (dUTP route): step 2/2. Functionally, this enzyme is involved in nucleotide metabolism: it produces dUMP, the immediate precursor of thymidine nucleotides and it decreases the intracellular concentration of dUTP so that uracil cannot be incorporated into DNA. This chain is Deoxyuridine 5'-triphosphate nucleotidohydrolase, found in Coxiella burnetii (strain Dugway 5J108-111).